A 154-amino-acid polypeptide reads, in one-letter code: CASP-like protein 5C2 (154 aa).

Topologically, residues methionine 1–arginine 17 are cytoplasmic. Residues phenylalanine 18–tyrosine 38 traverse the membrane as a helical segment. Residues aspartate 39–threonine 41 lie on the Extracellular side of the membrane. Residues threonine 42–leucine 62 traverse the membrane as a helical segment. Residues threonine 63–serine 81 are Cytoplasmic-facing. Residues isoleucine 82–alanine 102 traverse the membrane as a helical segment. The Extracellular portion of the chain corresponds to serine 103–alanine 128. A helical transmembrane segment spans residues alanine 129–leucine 149. The Cytoplasmic segment spans residues proline 150–tyrosine 154.

Belongs to the Casparian strip membrane proteins (CASP) family. Homodimer and heterodimers.

It localises to the cell membrane. The sequence is that of CASP-like protein 5C2 from Arabidopsis thaliana (Mouse-ear cress).